Consider the following 393-residue polypeptide: Putative mitogen-activated protein kinase kinase kinase 7-like (393 aa).

In terms of domain architecture, Protein kinase spans 11 to 266 (KLSEKFLGAG…PSMKEIEKFL (256 aa)). Residues 17 to 25 (LGAGSGGAV) and Lys-38 contribute to the ATP site. Asp-133 functions as the Proton acceptor in the catalytic mechanism. The segment at 339–379 (AAADGDREVRRAEKDTERETSRAAHNGERETRRAGQDVGRE) is disordered.

The protein belongs to the protein kinase superfamily. STE Ser/Thr protein kinase family. MAP kinase kinase kinase subfamily. The cofactor is Mg(2+).

The enzyme catalyses L-seryl-[protein] + ATP = O-phospho-L-seryl-[protein] + ADP + H(+). It catalyses the reaction L-threonyl-[protein] + ATP = O-phospho-L-threonyl-[protein] + ADP + H(+). In Drosophila melanogaster (Fruit fly), this protein is Putative mitogen-activated protein kinase kinase kinase 7-like (Takl1).